A 332-amino-acid polypeptide reads, in one-letter code: D-glutamate N-acetyltransferase (332 aa).

The protein belongs to the N-acetyltransferase DgcN family.

The enzyme catalyses D-glutamate + acetyl-CoA = N-acetyl-D-glutamate + CoA + H(+). It catalyses the reaction D-aspartate + acetyl-CoA = N-acetyl-D-aspartate + CoA + H(+). It carries out the reaction D-glutamine + acetyl-CoA = N-acetyl-D-glutamine + CoA + H(+). The protein operates within amino-acid degradation. Its function is as follows. N-acetyltransferase involved in a deamination-independent D-glutamate degradation pathway, named the DgcN-DgcA pathway. Catalyzes the transfer of the acetyl moiety from acetyl-CoA to D-glutamate to generate N-acetyl-D-glutamate. Can also acetylate D-aspartate and D-glutamine, with lower efficiency. Has low activity with D-asparagine. Cannot use succinyl-CoA. The chain is D-glutamate N-acetyltransferase from Pseudoalteromonas sp.